A 673-amino-acid chain; its full sequence is DNA ligase (673 aa).

Residues D35–D39, S84–L85, and E115 each bind NAD(+). Catalysis depends on K117, which acts as the N6-AMP-lysine intermediate. R138, E178, K294, and K318 together coordinate NAD(+). Zn(2+) contacts are provided by C412, C415, C430, and C435. A BRCT domain is found at L594–E673.

The protein belongs to the NAD-dependent DNA ligase family. LigA subfamily. It depends on Mg(2+) as a cofactor. Mn(2+) serves as cofactor.

The enzyme catalyses NAD(+) + (deoxyribonucleotide)n-3'-hydroxyl + 5'-phospho-(deoxyribonucleotide)m = (deoxyribonucleotide)n+m + AMP + beta-nicotinamide D-nucleotide.. Functionally, DNA ligase that catalyzes the formation of phosphodiester linkages between 5'-phosphoryl and 3'-hydroxyl groups in double-stranded DNA using NAD as a coenzyme and as the energy source for the reaction. It is essential for DNA replication and repair of damaged DNA. This chain is DNA ligase, found in Herpetosiphon aurantiacus (strain ATCC 23779 / DSM 785 / 114-95).